The primary structure comprises 361 residues: Deoxyhypusine hydroxylase (361 aa).

HEAT-like PBS-type repeat units lie at residues 59–85, 94–120, 183–211, and 216–242; these read LKHELAYVLGQLLNTRALPTLSRVLEN, VRHEAAEALGAIGAEESLPILRKYMQD, QRYRAMFALRDFGAGSKEAVEALADGFRD, and FRHEIAYIFGQLSSPYSIPSLLSRLRD. Residues His-61, Glu-62, His-96, and Glu-97 each contribute to the Fe cation site. Residues His-218, Glu-219, His-251, and Glu-252 each coordinate Fe cation.

It belongs to the deoxyhypusine hydroxylase family. Fe(2+) serves as cofactor.

It localises to the cytoplasm. Its subcellular location is the nucleus. The catalysed reaction is [eIF5A protein]-deoxyhypusine + AH2 + O2 = [eIF5A protein]-hypusine + A + H2O. It participates in protein modification; eIF5A hypusination. Its function is as follows. Catalyzes the hydroxylation of the N(6)-(4-aminobutyl)-L-lysine intermediate to form hypusine, an essential post-translational modification only found in mature eIF-5A factor. The chain is Deoxyhypusine hydroxylase from Cryptococcus neoformans var. neoformans serotype D (strain JEC21 / ATCC MYA-565) (Filobasidiella neoformans).